The sequence spans 314 residues: Lipid A biosynthesis acyltransferase 2 (314 aa).

Residues 17-37 (LSPVYWFTWFVLGMIAGISMF) traverse the membrane as a helical segment. The short motif at 137–142 (HGWSVD) is the HXXXXD motif element.

This sequence belongs to the LpxL/LpxM/LpxP family. LpxM subfamily.

It localises to the cell inner membrane. The enzyme catalyses an alpha-Kdo-(2-&gt;4)-alpha-Kdo-(2-&gt;6)-(acyl)-lipid IVA + a fatty acyl-[ACP] = an alpha-Kdo-(2-&gt;4)-alpha-Kdo-(2-&gt;6)-lipid A + holo-[ACP]. It participates in glycolipid biosynthesis; KDO(2)-lipid A biosynthesis; KDO(2)-lipid A from CMP-3-deoxy-D-manno-octulosonate and lipid IV(A): step 4/4. The protein operates within bacterial outer membrane biogenesis; lipopolysaccharide biosynthesis. Functionally, catalyzes the transfer of an acyl chain from an acyl-[acyl-carrier-protein] (ACP) to a Kdo(2)-(acyl)-lipid IV(A) to form a Kdo(2)-lipid A. This Shigella flexneri protein is Lipid A biosynthesis acyltransferase 2.